We begin with the raw amino-acid sequence, 129 residues long: NADH-quinone oxidoreductase subunit A (129 aa).

The next 3 helical transmembrane spans lie at 6 to 26 (FWPF…IVGF), 63 to 83 (LVAV…AWAV), and 89 to 109 (GWIG…ALIY).

This sequence belongs to the complex I subunit 3 family. In terms of assembly, NDH-1 is composed of 14 different subunits. Subunits NuoA, H, J, K, L, M, N constitute the membrane sector of the complex.

It is found in the cell inner membrane. It carries out the reaction a quinone + NADH + 5 H(+)(in) = a quinol + NAD(+) + 4 H(+)(out). In terms of biological role, NDH-1 shuttles electrons from NADH, via FMN and iron-sulfur (Fe-S) centers, to quinones in the respiratory chain. The immediate electron acceptor for the enzyme in this species is believed to be ubiquinone. Couples the redox reaction to proton translocation (for every two electrons transferred, four hydrogen ions are translocated across the cytoplasmic membrane), and thus conserves the redox energy in a proton gradient. This Nitrosococcus oceani (strain ATCC 19707 / BCRC 17464 / JCM 30415 / NCIMB 11848 / C-107) protein is NADH-quinone oxidoreductase subunit A.